A 548-amino-acid polypeptide reads, in one-letter code: Rhotekin (548 aa).

Residues 10–85 form the REM-1 domain; it reads DLNMLYIRQM…LQRRKEAQVL (76 aa). Serine 22 and serine 93 each carry phosphoserine. Residues 83 to 103 are disordered; the sequence is QVLGKTGRRPSDSVQPPERSP. Asymmetric dimethylarginine is present on arginine 217. Residue serine 219 is modified to Phosphoserine. The region spanning 296-403 is the PH domain; it reads QPTASGTLRV…WMEALWQLFL (108 aa). Phosphoserine occurs at positions 504, 513, and 528. A disordered region spans residues 506-548; the sequence is DAVPADHSLGPSRSVAPLPPQRSPQSRGFYSKSQLSTWLQSPV. A compositionally biased stretch (polar residues) spans 528-548; sequence SPQSRGFYSKSQLSTWLQSPV.

In terms of assembly, interacts via its C-terminal region with the TAX1BP3 PDZ domain. This interaction facilitates Rho-mediated activation of the c-Fos serum response element (SRE). Interacts with SEPT9. Specifically binds to GTP-bound RHOA, RHOB and RHOC and inhibits their GTPase activity.

Mediates Rho signaling to activate NF-kappa-B and may confer increased resistance to apoptosis to cells in gastric tumorigenesis. May play a novel role in the organization of septin structures. The sequence is that of Rhotekin from Rattus norvegicus (Rat).